The chain runs to 359 residues: Guanine nucleotide-binding protein G(q) subunit alpha (359 aa).

2 S-palmitoyl cysteine lipidation sites follow: Cys-9 and Cys-10. One can recognise a G-alpha domain in the interval 38–359 (RELKLLLLGT…QLNLKEYNLV (322 aa)). The tract at residues 41–54 (KLLLLGTGESGKST) is G1 motif. Residues Ser-50, Gly-51, Lys-52, Ser-53, Thr-54, Ser-156, Leu-180, Arg-181, and Arg-183 each contribute to the GTP site. Residue Ser-53 participates in Mg(2+) binding. The tract at residues 178-186 (DVLRVRVPT) is G2 motif. Residue Thr-186 coordinates Mg(2+). Residues 201–210 (FRMVDVGGQR) form a G3 motif region. At Gln-209 the chain carries 5-glutamyl histamine. The G4 motif stretch occupies residues 270-277 (ILFLNKKD). Residues Asn-274, Lys-275, Asp-277, and Ala-331 each contribute to the GTP site. Residues 329–334 (TCATDT) form a G5 motif region.

The protein belongs to the G-alpha family. G(q) subfamily. In terms of assembly, g proteins are composed of 3 units; alpha, beta and gamma. The alpha chain contains the guanine nucleotide binding site. Interacts (GDP-bound form) with RIC8A (via C-terminus); promoting GNAQ folding and association with the plasma membrane. Binds NHERF1. Forms a complex with PECAM1 and BDKRB2. Interacts with GAS2L2. In terms of processing, palmitoylated by ZDHHC3 and ZDHHC7. Palmitoylation occurs in the Golgi and participates in the localization of GNAQ to the plasma membrane. Post-translationally, histaminylated at Gln-209 residues by TGM2.

It is found in the cell membrane. The protein resides in the golgi apparatus. Its subcellular location is the nucleus. It localises to the nucleus membrane. It carries out the reaction GTP + H2O = GDP + phosphate + H(+). Its function is as follows. Guanine nucleotide-binding proteins (G proteins) function as transducers downstream of G protein-coupled receptors (GPCRs) in numerous signaling cascades. The alpha chain contains the guanine nucleotide binding site and alternates between an active, GTP-bound state and an inactive, GDP-bound state. Signaling by an activated GPCR promotes GDP release and GTP binding. The alpha subunit has a low GTPase activity that converts bound GTP to GDP, thereby terminating the signal. Both GDP release and GTP hydrolysis are modulated by numerous regulatory proteins. Signaling is mediated via phospholipase C-beta-dependent inositol lipid hydrolysis for signal propagation: activates phospholipase C-beta: following GPCR activation, GNAQ activates PLC-beta (PLCB1, PLCB2, PLCB3 or PLCB4), leading to production of diacylglycerol (DAG) and inositol 1,4,5-trisphosphate (IP3). Required for platelet activation. Regulates B-cell selection and survival and is required to prevent B-cell-dependent autoimmunity. Regulates chemotaxis of BM-derived neutrophils and dendritic cells (in vitro). Transduces FFAR4 signaling in response to long-chain fatty acids (LCFAs). Together with GNA11, required for heart development. The protein is Guanine nucleotide-binding protein G(q) subunit alpha (Gnaq) of Mus musculus (Mouse).